An 834-amino-acid polypeptide reads, in one-letter code: Periplasmic nitrate reductase (834 aa).

A signal peptide (tat-type signal) is located at residues 1–32 (MTDMKIDRRQMLKLEAAAIAAAAAGMPSTSLA). Positions 44–100 (LKWDKAACRFCGTGCSVMVATKDNRVVATHGDIKAEVNRGLNCVKGYFLSKIMYGHD) constitute a 4Fe-4S Mo/W bis-MGD-type domain. Positions 51, 54, 58, and 86 each coordinate [4Fe-4S] cluster. Residues K88, Q155, N180, C184, 217-224 (WGSNMAEM), 248-252 (STFEH), 267-269 (QTD), M378, Q382, N488, 514-515 (SD), K537, D564, and 724-733 (TGRVVEHWHS) contribute to the Mo-bis(molybdopterin guanine dinucleotide) site. A substrate-binding site is contributed by W800. Mo-bis(molybdopterin guanine dinucleotide) is bound by residues N808 and K825.

Belongs to the prokaryotic molybdopterin-containing oxidoreductase family. NasA/NapA/NarB subfamily. In terms of assembly, component of the periplasmic nitrate reductase NapAB complex composed of NapA and NapB. [4Fe-4S] cluster serves as cofactor. Requires Mo-bis(molybdopterin guanine dinucleotide) as cofactor. In terms of processing, predicted to be exported by the Tat system. The position of the signal peptide cleavage has not been experimentally proven.

It localises to the periplasm. It catalyses the reaction 2 Fe(II)-[cytochrome] + nitrate + 2 H(+) = 2 Fe(III)-[cytochrome] + nitrite + H2O. Functionally, catalytic subunit of the periplasmic nitrate reductase complex NapAB. Receives electrons from NapB and catalyzes the reduction of nitrate to nitrite. This is Periplasmic nitrate reductase from Bradyrhizobium sp. (strain BTAi1 / ATCC BAA-1182).